Reading from the N-terminus, the 430-residue chain is Enolase (430 aa).

Q165 contributes to the (2R)-2-phosphoglycerate binding site. E207 (proton donor) is an active-site residue. The Mg(2+) site is built by D244, E287, and D314. The (2R)-2-phosphoglycerate site is built by K339, R368, S369, and K390. Catalysis depends on K339, which acts as the Proton acceptor.

It belongs to the enolase family. Component of the RNA degradosome, a multiprotein complex involved in RNA processing and mRNA degradation. Requires Mg(2+) as cofactor.

It localises to the cytoplasm. The protein localises to the secreted. Its subcellular location is the cell surface. It carries out the reaction (2R)-2-phosphoglycerate = phosphoenolpyruvate + H2O. The protein operates within carbohydrate degradation; glycolysis; pyruvate from D-glyceraldehyde 3-phosphate: step 4/5. In terms of biological role, catalyzes the reversible conversion of 2-phosphoglycerate (2-PG) into phosphoenolpyruvate (PEP). It is essential for the degradation of carbohydrates via glycolysis. This chain is Enolase, found in Xanthomonas axonopodis pv. citri (strain 306).